The primary structure comprises 559 residues: Pentatricopeptide repeat-containing protein At2g42920, chloroplastic (559 aa).

The transit peptide at 1–14 (MSPTILSFSGVTVP) directs the protein to the chloroplast. PPR repeat units lie at residues 88–122 (NPFVWNTIIRGFSRSSFPEMAISIFIDMLCSSPSV), 125–159 (QRLTYPSVFKAYGRLGQARDGRQLHGMVIKEGLED), 160–190 (DSFIRNTMLHMYVTCGCLIEAWRIFLGMIGF), 191–221 (DVVAWNSMIMGFAKCGLIDQAQNLFDEMPQR), 222–256 (NGVSWNSMISGFVRNGRFKDALDMFREMQEKDVKP), 257–291 (DGFTMVSLLNACAYLGASEQGRWIHEYIVRNRFEL), 292–322 (NSIVVTALIDMYCKCGCIEEGLNVFECAPKK), 323–357 (QLSCWNSMILGLANNGFEERAMDLFSELERSGLEP), 358–388 (DSVSFIGVLTACAHSGEVHRADEFFRLMKEK), and 394–424 (SIKHYTLMVNVLGGAGLLEEAEALIKNMPVE). Residues 429–504 (IWSSLLSACR…EVGCSSIEVD (76 aa)) form a type E motif region. Positions 505-535 (FEVHEFISCGGTHPKSAEIYSLLDILNWDVS) are type E(+) motif.

It belongs to the PPR family. PCMP-E subfamily.

It localises to the plastid. Its subcellular location is the chloroplast. The chain is Pentatricopeptide repeat-containing protein At2g42920, chloroplastic (PCMP-E75) from Arabidopsis thaliana (Mouse-ear cress).